A 260-amino-acid chain; its full sequence is Hydroxyethylthiazole kinase 1 (260 aa).

A substrate-binding site is contributed by Met39. Arg115 and Thr160 together coordinate ATP. Gly187 is a binding site for substrate.

It belongs to the Thz kinase family. Requires Mg(2+) as cofactor.

The enzyme catalyses 5-(2-hydroxyethyl)-4-methylthiazole + ATP = 4-methyl-5-(2-phosphooxyethyl)-thiazole + ADP + H(+). The protein operates within cofactor biosynthesis; thiamine diphosphate biosynthesis; 4-methyl-5-(2-phosphoethyl)-thiazole from 5-(2-hydroxyethyl)-4-methylthiazole: step 1/1. In terms of biological role, catalyzes the phosphorylation of the hydroxyl group of 4-methyl-5-beta-hydroxyethylthiazole (THZ). The protein is Hydroxyethylthiazole kinase 1 of Streptococcus pneumoniae (strain ATCC 700669 / Spain 23F-1).